Reading from the N-terminus, the 544-residue chain is Chaperonin GroEL (544 aa).

ATP contacts are provided by residues 29–32 (TLGP), K50, 86–90 (DGTTT), G414, and D494.

It belongs to the chaperonin (HSP60) family. As to quaternary structure, forms a cylinder of 14 subunits composed of two heptameric rings stacked back-to-back. Interacts with the co-chaperonin GroES.

Its subcellular location is the cytoplasm. It catalyses the reaction ATP + H2O + a folded polypeptide = ADP + phosphate + an unfolded polypeptide.. Its function is as follows. Together with its co-chaperonin GroES, plays an essential role in assisting protein folding. The GroEL-GroES system forms a nano-cage that allows encapsulation of the non-native substrate proteins and provides a physical environment optimized to promote and accelerate protein folding. This is Chaperonin GroEL from Amoebophilus asiaticus (strain 5a2).